The sequence spans 599 residues: mRNA export factor MEX67 (599 aa).

The residue at position 2 (S2) is an N-acetylserine. LRR repeat units follow at residues 163 to 184 (IVES…STLA) and 189 to 210 (NLKN…EVWK). In terms of domain architecture, LRRCT spans 224–262 (NPITTDKLYRTEMLRLFPKLVVLDNVIVRDEQKLQTVYS). In terms of domain architecture, NTF2 spans 280–467 (SSTDFATNFL…VIIASDLLTV (188 aa)). The segment at 408–439 (KPELESNKKTGKNNYQKNRRYNHGYNSTSNNK) is disordered. A TAP-C domain is found at 546-599 (PVQLELLNKLHLETKLNAEYTFMLAEQSNWNYEVAIKGFQSSMNGIPREAFVQF).

It belongs to the NXF family. Interacts with nucleoporin complex NUP84 and MTR2. Interacts with MIP6.

It localises to the nucleus. The protein localises to the cytoplasm. In terms of biological role, involved in the export of mRNA from the nucleus to the cytoplasm. This is mRNA export factor MEX67 (MEX67) from Saccharomyces cerevisiae (strain ATCC 204508 / S288c) (Baker's yeast).